Reading from the N-terminus, the 241-residue chain is Probable transcriptional regulatory protein Mpe_A1337 (241 aa).

The tract at residues 1 to 20 (MAGHSKWANIQHRKGRQDEK) is disordered.

Belongs to the TACO1 family.

It is found in the cytoplasm. The chain is Probable transcriptional regulatory protein Mpe_A1337 from Methylibium petroleiphilum (strain ATCC BAA-1232 / LMG 22953 / PM1).